Reading from the N-terminus, the 930-residue chain is Protocadherin gamma-A4 (930 aa).

Positions methionine 1–alanine 27 are cleaved as a signal peptide. Cadherin domains are found at residues glutamate 28–phenylalanine 132, glycine 133–phenylalanine 241, threonine 242–valine 346, threonine 347–phenylalanine 451, threonine 452–isoleucine 561, and aspartate 569–aspartate 682. The Extracellular segment spans residues glutamate 28–tyrosine 691. Residues asparagine 418 and asparagine 544 are each glycosylated (N-linked (GlcNAc...) asparagine). The chain crosses the membrane as a helical span at residues leucine 692–isoleucine 712. Over histidine 713–lysine 930 the chain is Cytoplasmic. Disordered stretches follow at residues serine 803–asparagine 839 and alanine 900–lysine 930. Residues asparagine 920–lysine 930 are compositionally biased toward basic residues.

The protein resides in the cell membrane. Functionally, potential calcium-dependent cell-adhesion protein. May be involved in the establishment and maintenance of specific neuronal connections in the brain. This is Protocadherin gamma-A4 from Mus musculus (Mouse).